A 189-amino-acid chain; its full sequence is UPF0301 protein PP_4995 (189 aa).

Belongs to the UPF0301 (AlgH) family.

The chain is UPF0301 protein PP_4995 from Pseudomonas putida (strain ATCC 47054 / DSM 6125 / CFBP 8728 / NCIMB 11950 / KT2440).